Here is a 345-residue protein sequence, read N- to C-terminus: NADH-ubiquinone oxidoreductase chain 2 (345 aa).

The next 10 membrane-spanning stretches (helical) occupy residues 1–21 (MNPL…ILTT), 26–46 (WVSA…IISM), 60–80 (FLIQ…NAHL), 96–115 (IALT…HFWL), 122–144 (VPIL…LLIM), 148–170 (LIPT…LGGL), 201–223 (TLLN…HLTM), 242–262 (SLFL…GFIP), 274–294 (NLTP…MFYL), and 323–343 (TSTL…TPTL).

Belongs to the complex I subunit 2 family.

It is found in the mitochondrion inner membrane. The catalysed reaction is a ubiquinone + NADH + 5 H(+)(in) = a ubiquinol + NAD(+) + 4 H(+)(out). Functionally, core subunit of the mitochondrial membrane respiratory chain NADH dehydrogenase (Complex I) that is believed to belong to the minimal assembly required for catalysis. Complex I functions in the transfer of electrons from NADH to the respiratory chain. The immediate electron acceptor for the enzyme is believed to be ubiquinone. The protein is NADH-ubiquinone oxidoreductase chain 2 (MT-ND2) of Varanus nebulosus (Clouded monitor).